Reading from the N-terminus, the 179-residue chain is ATP-dependent protease subunit HslV (179 aa).

Residue T8 is part of the active site. Residues S164, C167, and T170 each coordinate Na(+).

This sequence belongs to the peptidase T1B family. HslV subfamily. A double ring-shaped homohexamer of HslV is capped on each side by a ring-shaped HslU homohexamer. The assembly of the HslU/HslV complex is dependent on binding of ATP.

It localises to the cytoplasm. It carries out the reaction ATP-dependent cleavage of peptide bonds with broad specificity.. With respect to regulation, allosterically activated by HslU binding. Functionally, protease subunit of a proteasome-like degradation complex believed to be a general protein degrading machinery. The chain is ATP-dependent protease subunit HslV from Staphylococcus carnosus (strain TM300).